The sequence spans 370 residues: Histidinol-phosphate aminotransferase 2 (370 aa).

At Lys230 the chain carries N6-(pyridoxal phosphate)lysine.

Belongs to the class-II pyridoxal-phosphate-dependent aminotransferase family. Histidinol-phosphate aminotransferase subfamily. In terms of assembly, homodimer. It depends on pyridoxal 5'-phosphate as a cofactor.

The enzyme catalyses L-histidinol phosphate + 2-oxoglutarate = 3-(imidazol-4-yl)-2-oxopropyl phosphate + L-glutamate. It functions in the pathway amino-acid biosynthesis; L-histidine biosynthesis; L-histidine from 5-phospho-alpha-D-ribose 1-diphosphate: step 7/9. This chain is Histidinol-phosphate aminotransferase 2, found in Pseudomonas fluorescens (strain Pf0-1).